The following is a 421-amino-acid chain: Medium-chain specific acyl-CoA dehydrogenase, mitochondrial (421 aa).

The N-terminal 25 residues, 1–25 (MAAALRRGYKVLRSVSHFECRAQHT), are a transit peptide targeting the mitochondrion. Residue Lys-69 is modified to N6-acetyllysine; alternate. Lys-69 is modified (N6-succinyllysine; alternate). Lys-79 carries the post-translational modification N6-acetyllysine. 158 to 167 (YCVTEPSAGS) contributes to the FAD binding site. Ser-167 contacts octanoyl-CoA. An N6-succinyllysine modification is found at Lys-179. Position 191-193 (191-193 (WIT)) interacts with FAD. Residue Lys-212 is modified to N6-acetyllysine; alternate. The residue at position 212 (Lys-212) is an N6-succinyllysine; alternate. Ser-216 serves as a coordination point for octanoyl-CoA. N6-acetyllysine; alternate is present on residues Lys-217, Lys-259, and Lys-271. 3 positions are modified to N6-succinyllysine; alternate: Lys-217, Lys-259, and Lys-271. Residues Asp-278 and Arg-281 each coordinate octanoyl-CoA. Lys-301 carries the post-translational modification N6-acetyllysine. FAD-binding positions include 306-308 (RKT) and 316-317 (HQ). Octanoyl-CoA contacts are provided by Arg-349 and Thr-351. At Thr-351 the chain carries Phosphothreonine. Residue 374–378 (QIFGG) coordinates FAD. Glu-401 lines the octanoyl-CoA pocket. The active-site Proton acceptor is the Glu-401. 402 to 405 (GTAQ) contacts FAD.

This sequence belongs to the acyl-CoA dehydrogenase family. In terms of assembly, homotetramer. Interacts with the heterodimeric electron transfer flavoprotein ETF. FAD serves as cofactor. In terms of processing, acetylated. Could occur at proximity of the cofactor-binding sites and reduce the catalytic activity. Could be deacetylated by SIRT3.

Its subcellular location is the mitochondrion matrix. It carries out the reaction a medium-chain 2,3-saturated fatty acyl-CoA + oxidized [electron-transfer flavoprotein] + H(+) = a medium-chain (2E)-enoyl-CoA + reduced [electron-transfer flavoprotein]. It catalyses the reaction pentanoyl-CoA + oxidized [electron-transfer flavoprotein] + H(+) = (2E)-pentenoyl-CoA + reduced [electron-transfer flavoprotein]. The catalysed reaction is hexanoyl-CoA + oxidized [electron-transfer flavoprotein] + H(+) = (2E)-hexenoyl-CoA + reduced [electron-transfer flavoprotein]. The enzyme catalyses octanoyl-CoA + oxidized [electron-transfer flavoprotein] + H(+) = (2E)-octenoyl-CoA + reduced [electron-transfer flavoprotein]. It carries out the reaction decanoyl-CoA + oxidized [electron-transfer flavoprotein] + H(+) = (2E)-decenoyl-CoA + reduced [electron-transfer flavoprotein]. It catalyses the reaction dodecanoyl-CoA + oxidized [electron-transfer flavoprotein] + H(+) = (2E)-dodecenoyl-CoA + reduced [electron-transfer flavoprotein]. The catalysed reaction is tetradecanoyl-CoA + oxidized [electron-transfer flavoprotein] + H(+) = (2E)-tetradecenoyl-CoA + reduced [electron-transfer flavoprotein]. The enzyme catalyses oxidized [electron-transfer flavoprotein] + hexadecanoyl-CoA + H(+) = (2E)-hexadecenoyl-CoA + reduced [electron-transfer flavoprotein]. It functions in the pathway lipid metabolism; mitochondrial fatty acid beta-oxidation. Its function is as follows. Medium-chain specific acyl-CoA dehydrogenase is one of the acyl-CoA dehydrogenases that catalyze the first step of mitochondrial fatty acid beta-oxidation, an aerobic process breaking down fatty acids into acetyl-CoA and allowing the production of energy from fats. The first step of fatty acid beta-oxidation consists in the removal of one hydrogen from C-2 and C-3 of the straight-chain fatty acyl-CoA thioester, resulting in the formation of trans-2-enoyl-CoA. Electron transfer flavoprotein (ETF) is the electron acceptor that transfers electrons to the main mitochondrial respiratory chain via ETF-ubiquinone oxidoreductase (ETF dehydrogenase). Among the different mitochondrial acyl-CoA dehydrogenases, medium-chain specific acyl-CoA dehydrogenase acts specifically on acyl-CoAs with saturated 6 to 12 carbons long primary chains. This Rattus norvegicus (Rat) protein is Medium-chain specific acyl-CoA dehydrogenase, mitochondrial.